The sequence spans 274 residues: MAD2L1-binding protein (274 aa).

Positions 45–78 (ASEAFCPRDCMVPVVFPGPVSQEGCCQFTCELLK) are interaction with MAD2L1. S102 is modified (phosphoserine).

This sequence belongs to the MAD2L1BP family. Interacts with MAD2L1.

Its subcellular location is the nucleus. It localises to the cytoplasm. It is found in the cytoskeleton. The protein localises to the spindle. Functionally, may function to silence the spindle checkpoint and allow mitosis to proceed through anaphase by binding MAD2L1 after it has become dissociated from the MAD2L1-CDC20 complex. The sequence is that of MAD2L1-binding protein (MAD2L1BP) from Homo sapiens (Human).